A 249-amino-acid polypeptide reads, in one-letter code: ATP synthase subunit a (249 aa).

The next 6 helical transmembrane spans lie at 26 to 46, 84 to 104, 114 to 134, 143 to 163, 185 to 205, and 208 to 228; these read FTNVSAFMVATVVLASGFLYL, FFPFVFSLFMFVLVANFIGLF, IIVTFALSLLVIGTVIFYGFF, LFVPSGVPGIIVPLVVLIEII, ITLKVFAGFVVSLSSLGALGI, and AVLPLLMTVAITALEFLVAFL.

Belongs to the ATPase A chain family. F-type ATPases have 2 components, CF(1) - the catalytic core - and CF(0) - the membrane proton channel. CF(1) has five subunits: alpha(3), beta(3), gamma(1), delta(1), epsilon(1). CF(0) has three main subunits: a(1), b(2) and c(9-12). The alpha and beta chains form an alternating ring which encloses part of the gamma chain. CF(1) is attached to CF(0) by a central stalk formed by the gamma and epsilon chains, while a peripheral stalk is formed by the delta and b chains.

It is found in the cell inner membrane. Functionally, key component of the proton channel; it plays a direct role in the translocation of protons across the membrane. The protein is ATP synthase subunit a of Brucella canis (strain ATCC 23365 / NCTC 10854 / RM-666).